The following is a 740-amino-acid chain: E3 ubiquitin-protein ligase WAV3 (740 aa).

A disordered region spans residues 14–105 (PRNSDAAAPD…AISNPSSPRS (92 aa)). The segment covering 49–67 (SGGSNPSTPRSTSSPSLRC) has biased composition (low complexity). Over residues 71-90 (DAQTPTAEQTSTPRSATKSP) the composition is skewed to polar residues. The RING-type; atypical zinc-finger motif lies at 122-167 (CGICLNSVKTGQGTAKYTAECSHAFHFPCIADYVRKQGKLVCPVCN). Residues 332–476 (DLVVVVDVGG…IPVTEHGFGE (145 aa)) form the VWFA domain. A disordered region spans residues 677 to 709 (QSQHQQQHNQRRRGSERETTTTMTLMDENGEPL).

In terms of assembly, interacts with SINAT1, SINAT2, SINAT3, SINAT4, SINAT5, TOR1/SPR2 and FIP2. As to expression, expressed in root tips and leaf primordia.

The catalysed reaction is S-ubiquitinyl-[E2 ubiquitin-conjugating enzyme]-L-cysteine + [acceptor protein]-L-lysine = [E2 ubiquitin-conjugating enzyme]-L-cysteine + N(6)-ubiquitinyl-[acceptor protein]-L-lysine.. Its function is as follows. E3 ubiquitin-protein ligase involved in the regulation of root growth. Acts as a positive regulator of root gravitropism. Possesses E3 protein ligase activity in vitro. This is E3 ubiquitin-protein ligase WAV3 from Arabidopsis thaliana (Mouse-ear cress).